We begin with the raw amino-acid sequence, 848 residues long: Translation initiation factor IF-2 (848 aa).

The span at 1 to 10 (MSENNNDKIT) shows a compositional bias: basic and acidic residues. Disordered regions lie at residues 1-79 (MSEN…EKPV) and 121-163 (AERQ…LFSS). Over residues 17–33 (LKRSGSETNTVKQNFNH) the composition is skewed to polar residues. Residues 121-138 (AERQAAEKQAKESEEGLH) show a composition bias toward basic and acidic residues. A compositionally biased stretch (polar residues) spans 149–163 (KSSSNTTKPTPLFSS). A tr-type G domain is found at 346–513 (TRPPIVTIMG…AILLQAEILD (168 aa)). The segment at 355 to 362 (GHVDHGKT) is G1. 355 to 362 (GHVDHGKT) contacts GTP. Positions 380 to 384 (GITQH) are G2. The segment at 401–404 (DTPG) is G3. GTP is bound by residues 401–405 (DTPGH) and 455–458 (NKID). A G4 region spans residues 455-458 (NKID). The segment at 491-493 (SAK) is G5.

This sequence belongs to the TRAFAC class translation factor GTPase superfamily. Classic translation factor GTPase family. IF-2 subfamily.

It is found in the cytoplasm. One of the essential components for the initiation of protein synthesis. Protects formylmethionyl-tRNA from spontaneous hydrolysis and promotes its binding to the 30S ribosomal subunits. Also involved in the hydrolysis of GTP during the formation of the 70S ribosomal complex. In Bartonella bacilliformis (strain ATCC 35685 / KC583 / Herrer 020/F12,63), this protein is Translation initiation factor IF-2.